The sequence spans 197 residues: Peptide deformylase (197 aa).

Fe cation contacts are provided by Cys106 and His148. Residue Glu149 is part of the active site. His152 contacts Fe cation.

Belongs to the polypeptide deformylase family. Requires Fe(2+) as cofactor.

It catalyses the reaction N-terminal N-formyl-L-methionyl-[peptide] + H2O = N-terminal L-methionyl-[peptide] + formate. Removes the formyl group from the N-terminal Met of newly synthesized proteins. Requires at least a dipeptide for an efficient rate of reaction. N-terminal L-methionine is a prerequisite for activity but the enzyme has broad specificity at other positions. The chain is Peptide deformylase from Mycolicibacterium gilvum (strain PYR-GCK) (Mycobacterium gilvum (strain PYR-GCK)).